The following is a 425-amino-acid chain: Putative nucleoside transporter YegT (425 aa).

The Periplasmic portion of the chain corresponds to 1 to 8 (MKTTAKLS). The helical transmembrane segment at 9–29 (FMMFVEWFIWGAWFVPLWLWL) threads the bilayer. The Cytoplasmic portion of the chain corresponds to 30-38 (SKSGFSAGE). The chain crosses the membrane as a helical span at residues 39 to 59 (IGWSYACTAIAAILSPILVGS). The Periplasmic portion of the chain corresponds to 60–63 (ITDR). The chain crosses the membrane as a helical span at residues 64-84 (FFSAQKVLAVLMFAGALLMYF). Residues 85–90 (AAQQTT) are Cytoplasmic-facing. A helical membrane pass occupies residues 91 to 111 (FAGFFPLLLAYSLTYMPTIAL). The Periplasmic portion of the chain corresponds to 112 to 131 (TNSIAFANVPDVERDFPRIR). A helical transmembrane segment spans residues 132 to 152 (VMGTIGWIASGLACGFLPQIL). Residues 153–161 (GYADISPTN) are Cytoplasmic-facing. The chain crosses the membrane as a helical span at residues 162 to 182 (IPLLITAGSSALLGVFAFFLP). The Periplasmic portion of the chain corresponds to 183–210 (DTPPKSTGKMDIKVMLGLDALILLRDKN). A helical membrane pass occupies residues 211-231 (FLVFFFCSFLFAMPLAFYYIF). At 232–244 (ANGYLTEVGMKNA) the chain is on the cytoplasmic side. Residues 245 to 265 (TGWMTLGQFSEIFFMLALPFF) traverse the membrane as a helical segment. The Periplasmic segment spans residues 266 to 287 (TKRFGIKKVLLLGLVTAAIRYG). The chain crosses the membrane as a helical span at residues 288–308 (FFIYGSADEYFTYALLFLGIL). Residues 309-339 (LHGVSYDFYYVTAYIYVDKKAPVHMRTAAQG) lie on the Cytoplasmic side of the membrane. Residues 340-360 (LITLCCQGFGSLLGYRLGGVM) traverse the membrane as a helical segment. At 361 to 379 (MEKMFAYQEPVNGLTFNWS) the chain is on the periplasmic side. A helical membrane pass occupies residues 380–400 (GMWTFGAVMIAIIAVLFMIFF). At 401–425 (RESDNEITAIKVDDRDIALTQGEVK) the chain is on the cytoplasmic side.

The protein belongs to the major facilitator superfamily. Nucleoside:H(+) symporter (NHS) (TC 2.A.1.10) family.

The protein localises to the cell inner membrane. In terms of biological role, could be involved in nucleoside transport. The protein is Putative nucleoside transporter YegT (yegT) of Escherichia coli (strain K12).